We begin with the raw amino-acid sequence, 1758 residues long: Collagen alpha-2(IV) chain (1758 aa).

Residues Met-1–Ser-26 form the signal peptide. The segment at Gln-27–Gly-42 is 7S domain. Positions Gly-42–Ala-1527 are triple-helical region. Over residues Met-47 to Arg-62 the composition is skewed to low complexity. Disordered regions lie at residues Met-47–Gly-943, Gly-955–Gly-1304, Gly-1316–Pro-1339, and Gly-1367–Gly-1525. Residues Gly-102–Gly-111 are compositionally biased toward gly residues. A compositionally biased stretch (pro residues) spans Pro-134–Pro-149. The segment covering Tyr-189–Asp-198 has biased composition (basic and acidic residues). Low complexity predominate over residues Pro-224–Val-234. O-linked (Xyl...) (glycosaminoglycan) serine glycosylation is present at Ser-248. The segment covering Pro-258 to Pro-267 has biased composition (basic and acidic residues). The span at Gly-268–Gly-283 shows a compositional bias: gly residues. Over residues Pro-367–Pro-382 the composition is skewed to pro residues. Over residues Gly-398–Gly-407 the composition is skewed to gly residues. Composition is skewed to low complexity over residues Tyr-408–Pro-417 and Ala-429–Pro-439. Positions Lys-464–Glu-479 are enriched in basic and acidic residues. Low complexity-rich tracts occupy residues Gly-495 to Asn-509 and Pro-568 to Pro-584. Over residues Pro-638–Pro-648 the composition is skewed to pro residues. 3 stretches are compositionally biased toward gly residues: residues Gly-693 to Gly-702, Gly-737 to Gly-746, and Gly-782 to Gly-791. Positions Leu-839–Pro-858 are enriched in low complexity. Over residues Gly-859–Gly-868 the composition is skewed to gly residues. The segment covering Ala-929–Leu-938 has biased composition (low complexity). The span at Gly-958–Gly-967 shows a compositional bias: gly residues. Residues Leu-968–Val-980 are compositionally biased toward low complexity. The span at Gly-988–Gly-997 shows a compositional bias: gly residues. Over residues Leu-1040–Pro-1056 the composition is skewed to low complexity. Positions Gly-1194–Gly-1203 are enriched in gly residues. Positions Phe-1237–Ser-1250 are enriched in low complexity. The span at Gly-1251 to Gly-1260 shows a compositional bias: gly residues. The segment covering Gly-1373–Gly-1382 has biased composition (gly residues). Low complexity-rich tracts occupy residues Leu-1413–Pro-1425 and Gly-1433–Leu-1454. 2 stretches are compositionally biased toward gly residues: residues Gly-1492 to Gly-1501 and Gly-1507 to Gly-1516. The region spanning Gly-1531–Thr-1754 is the Collagen IV NC1 domain. 6 cysteine pairs are disulfide-bonded: Cys-1546–Cys-1635, Cys-1579–Cys-1632, Cys-1591–Cys-1597, Cys-1654–Cys-1750, Cys-1688–Cys-1747, and Cys-1700–Cys-1707.

The protein belongs to the type IV collagen family. As to quaternary structure, trimers of two alpha 1(IV) and one alpha 2(IV) chain. Type IV collagen forms a mesh-like network linked through intermolecular interactions between 7S domains and between NC1 domains. Post-translationally, prolines at the third position of the tripeptide repeating unit (G-X-Y) are hydroxylated in some or all of the chains. Type IV collagens contain numerous cysteine residues which are involved in inter- and intramolecular disulfide bonding. 12 of these, located in the NC1 domain, are conserved in all known type IV collagens. In terms of processing, the trimeric structure of the NC1 domains is stabilized by covalent bonds between Lys and Met residues. As to expression, localizes to the basement membrane between distal tip cells and the germline. Localizes to the intestinal basement membrane.

Its subcellular location is the secreted. It is found in the extracellular space. The protein resides in the extracellular matrix. It localises to the basement membrane. In terms of biological role, collagen type IV is specific for basement membranes. Together with fbl-1 and downstream of metalloprotease mig-17, recruits nidogen nid-1 to the gonad basement membrane thereby probably inducing basement membrane remodeling required for the directional migration of distal tip cells. Required to restrict presynaptic growth at the neuromuscular junctions in late larval stage and in adult motor neurons. Vital for embryonic development. In Caenorhabditis elegans, this protein is Collagen alpha-2(IV) chain.